A 910-amino-acid polypeptide reads, in one-letter code: Eukaryotic translation initiation factor 3 subunit C (910 aa).

Positions 1 to 21 (MSRFFANGSESESESSEEEIQ) are disordered. The segment covering 11-20 (SESESSEEEI) has biased composition (acidic residues). Phosphoserine occurs at positions 34, 165, 176, and 185. Positions 157–281 (FREAPDQESE…KRAEDDEDGE (125 aa)) are disordered. Acidic residues predominate over residues 162-186 (DQESEAEDEVVALESDGGDAGDDSD). Residues 193 to 207 (EAAPKAVKSAPAKAA) show a composition bias toward low complexity. Over residues 209–235 (ADDDDSDDSIDWDSDSESETESSDDEN) the composition is skewed to acidic residues. Basic and acidic residues predominate over residues 240–268 (MRERFLKRTTEKEEKDDDKRKDKRKEQKT). A PCI domain is found at 639 to 815 (FHMHINLELL…ETVGMHRSEP (177 aa)). The interval 847–910 (FFQRGNMGNR…QQQVQTIDEE (64 aa)) is disordered. Positions 862-874 (NRNQNNQGGNWLG) are enriched in low complexity. Residues 882-891 (RNRNQRGHHK) show a composition bias toward basic residues. The segment covering 895 to 910 (DRQQQQQQQVQTIDEE) has biased composition (low complexity).

This sequence belongs to the eIF-3 subunit C family. In terms of assembly, component of the eukaryotic translation initiation factor 3 (eIF-3) complex. The eIF-3 complex interacts with pix.

The protein localises to the cytoplasm. Component of the eukaryotic translation initiation factor 3 (eIF-3) complex, which is involved in protein synthesis of a specialized repertoire of mRNAs and, together with other initiation factors, stimulates binding of mRNA and methionyl-tRNAi to the 40S ribosome. The eIF-3 complex specifically targets and initiates translation of a subset of mRNAs involved in cell proliferation. The sequence is that of Eukaryotic translation initiation factor 3 subunit C from Drosophila sechellia (Fruit fly).